A 330-amino-acid polypeptide reads, in one-letter code: PDZ and LIM domain protein 4 (330 aa).

The 84-residue stretch at 1–84 (MTHAVTLRGP…HLTLSVSRPE (84 aa)) folds into the PDZ domain. 2 disordered regions span residues 104 to 154 (DPEA…NEVT) and 219 to 239 (EAGE…KPAA). A phosphoserine mark is found at serine 111, serine 115, serine 118, serine 119, serine 124, and serine 134. A compositionally biased stretch (polar residues) spans 111–122 (SPATSRRSSISG). In terms of domain architecture, LIM zinc-binding spans 255–305 (CTRCGHGIVGTIVKARDKLYHPECFMCSDCGLNLKQRGYFFLDERLYCENH).

As to quaternary structure, homodimer. Interacts (via C-terminus only or via combined C-terminus and LIM domain, but not LIM domain only) with PTPN13 (via the second or fourth PDZ domains). Found in a complex with PTPN13 and TRIP6. Interacts (via PDZ domain) with ACTN1 and ACTN2 (via C-terminal SDL residues). Interacts (via PDZ domain) with TRIP6 (via the second LIM domain or via the third LIM domain plus C-terminus). Interacts (via LIM domain) with GRIA1 (via C-terminus); this interaction as well as the interaction with alpha-actinin is required for their colocalization in early endosomes. Interacts with PDLIM1. Forms (via LIM domain) a heterodimer with PDLIM3. Interacts directly with SRC (via kinase domain and to a lesser extent the SH2 domain). Post-translationally, phosphorylated on tyrosine residue(s). Can be dephosphorylated by PTPN13. As to expression, detected in several tissues, most prominent in brain and heart of adults. Expressed in embryonic fibroblasts.

Its subcellular location is the cytoplasm. It is found in the cytoskeleton. The protein localises to the cell projection. It localises to the dendritic spine. The protein resides in the early endosome membrane. Its subcellular location is the recycling endosome membrane. It is found in the nucleus. The protein localises to the perinuclear region. It localises to the lamellipodium. The protein resides in the synapse. Its subcellular location is the synaptosome. In terms of biological role, suppresses SRC activation by recognizing and binding to active SRC and facilitating PTPN13-mediated dephosphorylation of SRC 'Tyr-419' leading to its inactivation. Inactivated SRC dissociates from this protein allowing the initiation of a new SRC inactivation cycle. Involved in reorganization of the actin cytoskeleton. In nonmuscle cells, binds to ACTN1 (alpha-actinin-1), increases the affinity of ACTN1 to F-actin (filamentous actin), and promotes formation of actin stress fibers. Involved in regulation of the synaptic AMPA receptor transport in dendritic spines of hippocampal pyramidal neurons directing the receptors toward an insertion at the postsynaptic membrane. Links endosomal surface-internalized GRIA1-containing AMPA receptors to the alpha-actinin/actin cytoskeleton. Increases AMPA receptor-mediated excitatory postsynaptic currents in neurons. The sequence is that of PDZ and LIM domain protein 4 (Pdlim4) from Rattus norvegicus (Rat).